Here is a 252-residue protein sequence, read N- to C-terminus: Enolase-phosphatase E1 (252 aa).

The Mg(2+) site is built by Asp18 and Glu20. Residues 149–150 and Lys184 each bind substrate; that span reads SS. Mg(2+) is bound at residue Asp209.

It belongs to the HAD-like hydrolase superfamily. MasA/MtnC family. In terms of assembly, monomer. Mg(2+) is required as a cofactor.

The protein resides in the cytoplasm. Its subcellular location is the nucleus. It catalyses the reaction 5-methylsulfanyl-2,3-dioxopentyl phosphate + H2O = 1,2-dihydroxy-5-(methylsulfanyl)pent-1-en-3-one + phosphate. The protein operates within amino-acid biosynthesis; L-methionine biosynthesis via salvage pathway; L-methionine from S-methyl-5-thio-alpha-D-ribose 1-phosphate: step 3/6. It functions in the pathway amino-acid biosynthesis; L-methionine biosynthesis via salvage pathway; L-methionine from S-methyl-5-thio-alpha-D-ribose 1-phosphate: step 4/6. Its function is as follows. Bifunctional enzyme that catalyzes the enolization of 2,3-diketo-5-methylthiopentyl-1-phosphate (DK-MTP-1-P) into the intermediate 2-hydroxy-3-keto-5-methylthiopentenyl-1-phosphate (HK-MTPenyl-1-P), which is then dephosphorylated to form the acireductone 1,2-dihydroxy-3-keto-5-methylthiopentene (DHK-MTPene). This is Enolase-phosphatase E1 from Naegleria gruberi (Amoeba).